The primary structure comprises 371 residues: Chaperone protein DnaJ (371 aa).

The region spanning Cys-5–Gly-70 is the J domain. The CR-type zinc finger occupies Gly-127 to Gln-204. Zn(2+) contacts are provided by Cys-140, Cys-143, Cys-156, Cys-159, Cys-178, Cys-181, Cys-192, and Cys-195. CXXCXGXG motif repeat units follow at residues Cys-140–Gly-147, Cys-156–Gly-163, Cys-178–Gly-185, and Cys-192–Gly-199.

The protein belongs to the DnaJ family. In terms of assembly, homodimer. Zn(2+) is required as a cofactor.

It is found in the cytoplasm. Its function is as follows. Participates actively in the response to hyperosmotic and heat shock by preventing the aggregation of stress-denatured proteins and by disaggregating proteins, also in an autonomous, DnaK-independent fashion. Unfolded proteins bind initially to DnaJ; upon interaction with the DnaJ-bound protein, DnaK hydrolyzes its bound ATP, resulting in the formation of a stable complex. GrpE releases ADP from DnaK; ATP binding to DnaK triggers the release of the substrate protein, thus completing the reaction cycle. Several rounds of ATP-dependent interactions between DnaJ, DnaK and GrpE are required for fully efficient folding. Also involved, together with DnaK and GrpE, in the DNA replication of plasmids through activation of initiation proteins. The sequence is that of Chaperone protein DnaJ from Francisella tularensis subsp. tularensis (strain WY96-3418).